We begin with the raw amino-acid sequence, 110 residues long: UPF0122 protein YlxM (110 aa).

Belongs to the UPF0122 family.

Might take part in the signal recognition particle (SRP) pathway. This is inferred from the conservation of its genetic proximity to ftsY/ffh. May be a regulatory protein. The protein is UPF0122 protein YlxM (ylxM) of Bacillus subtilis (strain 168).